We begin with the raw amino-acid sequence, 105 residues long: Flagellar transcriptional regulator FlhD (105 aa).

The protein belongs to the FlhD family. In terms of assembly, homodimer; disulfide-linked. Forms a heterohexamer composed of two FlhC and four FlhD subunits. Each FlhC binds a FlhD dimer, forming a heterotrimer, and a hexamer assembles by dimerization of two heterotrimers.

It localises to the cytoplasm. Functionally, functions in complex with FlhC as a master transcriptional regulator that regulates transcription of several flagellar and non-flagellar operons by binding to their promoter region. Activates expression of class 2 flagellar genes, including fliA, which is a flagellum-specific sigma factor that turns on the class 3 genes. Also regulates genes whose products function in a variety of physiological pathways. The chain is Flagellar transcriptional regulator FlhD from Ralstonia nicotianae (strain ATCC BAA-1114 / GMI1000) (Ralstonia solanacearum).